The sequence spans 476 residues: Glycogen synthase (476 aa).

An ADP-alpha-D-glucose-binding site is contributed by K15.

This sequence belongs to the glycosyltransferase 1 family. Bacterial/plant glycogen synthase subfamily.

It catalyses the reaction [(1-&gt;4)-alpha-D-glucosyl](n) + ADP-alpha-D-glucose = [(1-&gt;4)-alpha-D-glucosyl](n+1) + ADP + H(+). It participates in glycan biosynthesis; glycogen biosynthesis. Synthesizes alpha-1,4-glucan chains using ADP-glucose. The sequence is that of Glycogen synthase from Bacillus cereus (strain B4264).